The following is a 372-amino-acid chain: 4-hydroxybenzoate polyprenyltransferase, mitochondrial (372 aa).

Residues Met1 to Ser42 constitute a mitochondrion transit peptide. The next 7 membrane-spanning stretches (helical) occupy residues Pro92–Met112, Gly114–Met134, Ala171–Ala191, Cys193–Phe213, Ala229–Leu249, Ile298–Gly318, and Thr352–Leu372.

It belongs to the UbiA prenyltransferase family. Requires Mg(2+) as cofactor.

It localises to the mitochondrion inner membrane. The catalysed reaction is an all-trans-polyprenyl diphosphate + 4-hydroxybenzoate = a 4-hydroxy-3-(all-trans-polyprenyl)benzoate + diphosphate. The protein operates within cofactor biosynthesis; ubiquinone biosynthesis. In terms of biological role, catalyzes the prenylation of para-hydroxybenzoate (PHB) with an all-trans polyprenyl group. Mediates the second step in the final reaction sequence of coenzyme Q (CoQ) biosynthesis, which is the condensation of the polyisoprenoid side chain with PHB, generating the first membrane-bound Q intermediate. This is 4-hydroxybenzoate polyprenyltransferase, mitochondrial from Saccharomyces cerevisiae (strain ATCC 204508 / S288c) (Baker's yeast).